Here is a 252-residue protein sequence, read N- to C-terminus: MGQKVHPTGFRLGIIKDWTSRWYDDGPVIAEKIKQDQVIRNYVNTRLKKERAGVARIVIERTTKHIKINIFAARPGAVVGRKGEEINNLSQELNRITGKEVKIDVVEVVKPEVEAQLIGENIAYQLENRVSFRRAMKQAIQQAMRAGAEGIRIRCAGRLGGVEIARSEQYKEGKIPLHTIRANVDYASVTAHTIAGAIGIKVWVYKGEVLVQRIDAVEEEEMKKIRDRRNDQRSRGGRDSRNKRRRRPKNTA.

Positions I39–V109 constitute a KH type-2 domain. Over residues M222–S240 the composition is skewed to basic and acidic residues. Positions M222–A252 are disordered. Basic residues predominate over residues R241–A252.

Belongs to the universal ribosomal protein uS3 family. In terms of assembly, part of the 30S ribosomal subunit. Forms a tight complex with proteins S10 and S14.

Binds the lower part of the 30S subunit head. Binds mRNA in the 70S ribosome, positioning it for translation. The sequence is that of Small ribosomal subunit protein uS3 from Chlorobium phaeobacteroides (strain BS1).